We begin with the raw amino-acid sequence, 43 residues long: uncharacterized protein (43 aa).

This is an uncharacterized protein from Dictyostelium discoideum (Social amoeba).